The primary structure comprises 126 residues: Aspartate 1-decarboxylase (126 aa).

S25 acts as the Schiff-base intermediate with substrate; via pyruvic acid in catalysis. S25 carries the pyruvic acid (Ser) modification. Substrate is bound at residue T57. Y58 (proton donor) is an active-site residue. 73–75 (GAA) provides a ligand contact to substrate.

Belongs to the PanD family. In terms of assembly, heterooctamer of four alpha and four beta subunits. It depends on pyruvate as a cofactor. In terms of processing, is synthesized initially as an inactive proenzyme, which is activated by self-cleavage at a specific serine bond to produce a beta-subunit with a hydroxyl group at its C-terminus and an alpha-subunit with a pyruvoyl group at its N-terminus.

Its subcellular location is the cytoplasm. The enzyme catalyses L-aspartate + H(+) = beta-alanine + CO2. It participates in cofactor biosynthesis; (R)-pantothenate biosynthesis; beta-alanine from L-aspartate: step 1/1. Functionally, catalyzes the pyruvoyl-dependent decarboxylation of aspartate to produce beta-alanine. This is Aspartate 1-decarboxylase from Azotobacter vinelandii (strain DJ / ATCC BAA-1303).